The following is a 312-amino-acid chain: Taste receptor type 2 member 140 (312 aa).

Topologically, residues Met-1–Leu-9 are extracellular. A helical membrane pass occupies residues Leu-10 to Val-30. Residues Asn-31–Gln-46 are Cytoplasmic-facing. A helical membrane pass occupies residues Ile-47–Val-67. The Extracellular segment spans residues Ile-68–Asn-87. The helical transmembrane segment at Phe-88–Phe-108 threads the bilayer. The Cytoplasmic portion of the chain corresponds to Leu-109 to Thr-133. The helical transmembrane segment at Leu-134 to Ile-154 threads the bilayer. Residues Ser-155–Met-185 are Extracellular-facing. Residue Asn-162 is glycosylated (N-linked (GlcNAc...) asparagine). The helical transmembrane segment at Phe-186–Trp-206 threads the bilayer. Topologically, residues Arg-207 to Lys-229 are cytoplasmic. A helical transmembrane segment spans residues Ala-230–Met-250. The Extracellular segment spans residues Gln-251–Asn-264. Residues Leu-265–Gly-285 form a helical membrane-spanning segment. Topologically, residues Asn-286–Pro-312 are cytoplasmic.

This sequence belongs to the G-protein coupled receptor T2R family.

The protein localises to the membrane. In terms of biological role, putative taste receptor which may play a role in the perception of bitterness. The chain is Taste receptor type 2 member 140 from Rattus norvegicus (Rat).